Consider the following 141-residue polypeptide: Large ribosomal subunit protein uL11 (141 aa).

This sequence belongs to the universal ribosomal protein uL11 family. Part of the ribosomal stalk of the 50S ribosomal subunit. Interacts with L10 and the large rRNA to form the base of the stalk. L10 forms an elongated spine to which L12 dimers bind in a sequential fashion forming a multimeric L10(L12)X complex. Post-translationally, one or more lysine residues are methylated.

In terms of biological role, forms part of the ribosomal stalk which helps the ribosome interact with GTP-bound translation factors. The chain is Large ribosomal subunit protein uL11 from Trichodesmium erythraeum (strain IMS101).